The chain runs to 909 residues: MFSAIAKKVFGTRNDRAVKRLAKEVERINALEPEIEALSDDQLRARTEAFREQVEQGRTLDDLLPEAFAVAREASRRVLGMRHFDVQLIGGMVLHQGKIAEMKTGEGKTLVATLAVYLHALSGRGVHVVTVNDYLARRDAAWMGRIYEFLGLSVGVVVPGQSREEKKAAYEADITYGTNNEFGFDYLRDNMAFRPEDRVQRELAYAIVDEVDSILIDEARTPLIISGPAEQSSELYQQMTRIVPRLQRQEEEDGPGDYYLDEKARQAHITEEGHENIERLLQAEGLLEEGESLYDARNISLVHHLNAALRAHTLFQKDVNYLVQDNKIVIVDEFTGRAMPGRRWSEGLHQAVEAKEGVPIQSENQTLASITFQNYFRMYELLAGMTGTADTEAFEFQHIYGLEVLSIPTHKPMIRDDMTDLVYRTAREKYDAIIEDIQWCAQHDRPVLVGTTSIEASELLSKALRKAKIPHNVLNAKNHEQEAGIIANAGLPGAVTIATNMAGRGTDIVLGGNLEAELAELGEDASEEKIEQVKRDWQARHDRVIEAGGLHVIGTERHESRRIDNQLRGRAGRQGDPGSSRFYLSLEDSLLRIFASERMSGMMQRLGMEEGEAIESPMVSRVIENAQRKVEAYNFDVRKHLLDFDDVANDQRRVIYQQRRELLEADDVSETVDAMRNDVIDSVISEFIPPGSIDEQWDVAGLEETLESDFGLKLPLRQWLDEDDSLHEETLRERIHHEVEAHYRGKEELAGAEVLRQFEKAVMLQVLDKTWKDHLAAMDYLRQGIHLRGYAQRNPKQEFKREAFAMFQEMLEGLKREVVGLLCRVRVRAEEDVEAVEEQRRRQGDMQYRHAQANSLSGQGAGGEGAAGGTARGPVQQADQLPFGRKVGRNEPCPCGSGKKYKQCCGKLS.

ATP contacts are provided by residues glutamine 87, 105–109, and aspartate 507; that span reads GEGKT. Residues 834–909 form a disordered region; that stretch reads EAVEEQRRRQ…KYKQCCGKLS (76 aa). Over residues 837–848 the composition is skewed to basic and acidic residues; the sequence is EEQRRRQGDMQY. The segment covering 859-871 has biased composition (gly residues); it reads QGAGGEGAAGGTA. Zn(2+)-binding residues include cysteine 893, cysteine 895, cysteine 904, and cysteine 905.

Belongs to the SecA family. Monomer and homodimer. Part of the essential Sec protein translocation apparatus which comprises SecA, SecYEG and auxiliary proteins SecDF-YajC and YidC. Zn(2+) is required as a cofactor.

Its subcellular location is the cell inner membrane. It localises to the cytoplasm. It carries out the reaction ATP + H2O + cellular proteinSide 1 = ADP + phosphate + cellular proteinSide 2.. Part of the Sec protein translocase complex. Interacts with the SecYEG preprotein conducting channel. Has a central role in coupling the hydrolysis of ATP to the transfer of proteins into and across the cell membrane, serving both as a receptor for the preprotein-SecB complex and as an ATP-driven molecular motor driving the stepwise translocation of polypeptide chains across the membrane. In Alkalilimnicola ehrlichii (strain ATCC BAA-1101 / DSM 17681 / MLHE-1), this protein is Protein translocase subunit SecA.